Reading from the N-terminus, the 146-residue chain is Hemoglobin subunit beta (146 aa).

Residues 2-146 (QWTAEEKQLI…VAHALARKYH (145 aa)) form the Globin domain. Residues H63 and H92 each coordinate heme b.

The protein belongs to the globin family. Heterotetramer of two alpha chains and two beta chains. In terms of tissue distribution, red blood cells.

In terms of biological role, involved in oxygen transport from the lung to the various peripheral tissues. The protein is Hemoglobin subunit beta (HBB) of Turdus merula (Common blackbird).